A 394-amino-acid chain; its full sequence is V-type proton ATPase subunit C (394 aa).

Ser-17 carries the post-translational modification Phosphoserine.

This sequence belongs to the V-ATPase C subunit family. In terms of assembly, V-ATPase is a heteromultimeric enzyme composed of a peripheral catalytic V1 complex (components A to H) attached to an integral membrane V0 proton pore complex (components: a, c, c', c'', d, e, f and VOA1).

Its subcellular location is the cytoplasm. The protein resides in the vacuole membrane. Functionally, subunit of the V1 complex of vacuolar(H+)-ATPase (V-ATPase), a multisubunit enzyme composed of a peripheral complex (V1) that hydrolyzes ATP and a membrane integral complex (V0) that translocates protons. V-ATPase is responsible for acidifying and maintaining the pH of intracellular compartments. Subunit C is necessary for the assembly of the catalytic sector of the enzyme and is likely to have a specific function in its catalytic activity. Reversibly leaves the enzyme after glucose depletion, causing the catalytic subcomplex V1 to detach from the V0 section. The sequence is that of V-type proton ATPase subunit C from Schizosaccharomyces pombe (strain 972 / ATCC 24843) (Fission yeast).